A 369-amino-acid polypeptide reads, in one-letter code: 4-hydroxy-3-methylbut-2-en-1-yl diphosphate synthase (flavodoxin) (369 aa).

Positions 270, 273, 305, and 312 each coordinate [4Fe-4S] cluster.

This sequence belongs to the IspG family. It depends on [4Fe-4S] cluster as a cofactor.

It catalyses the reaction (2E)-4-hydroxy-3-methylbut-2-enyl diphosphate + oxidized [flavodoxin] + H2O + 2 H(+) = 2-C-methyl-D-erythritol 2,4-cyclic diphosphate + reduced [flavodoxin]. It participates in isoprenoid biosynthesis; isopentenyl diphosphate biosynthesis via DXP pathway; isopentenyl diphosphate from 1-deoxy-D-xylulose 5-phosphate: step 5/6. Functionally, converts 2C-methyl-D-erythritol 2,4-cyclodiphosphate (ME-2,4cPP) into 1-hydroxy-2-methyl-2-(E)-butenyl 4-diphosphate. The chain is 4-hydroxy-3-methylbut-2-en-1-yl diphosphate synthase (flavodoxin) from Pseudomonas putida (strain ATCC 47054 / DSM 6125 / CFBP 8728 / NCIMB 11950 / KT2440).